The primary structure comprises 490 residues: Aspartyl/glutamyl-tRNA(Asn/Gln) amidotransferase subunit B (490 aa).

The protein belongs to the GatB/GatE family. GatB subfamily. As to quaternary structure, heterotrimer of A, B and C subunits.

It catalyses the reaction L-glutamyl-tRNA(Gln) + L-glutamine + ATP + H2O = L-glutaminyl-tRNA(Gln) + L-glutamate + ADP + phosphate + H(+). It carries out the reaction L-aspartyl-tRNA(Asn) + L-glutamine + ATP + H2O = L-asparaginyl-tRNA(Asn) + L-glutamate + ADP + phosphate + 2 H(+). Its function is as follows. Allows the formation of correctly charged Asn-tRNA(Asn) or Gln-tRNA(Gln) through the transamidation of misacylated Asp-tRNA(Asn) or Glu-tRNA(Gln) in organisms which lack either or both of asparaginyl-tRNA or glutaminyl-tRNA synthetases. The reaction takes place in the presence of glutamine and ATP through an activated phospho-Asp-tRNA(Asn) or phospho-Glu-tRNA(Gln). The protein is Aspartyl/glutamyl-tRNA(Asn/Gln) amidotransferase subunit B of Burkholderia pseudomallei (strain 1106a).